We begin with the raw amino-acid sequence, 59 residues long: Large ribosomal subunit protein uL30 (59 aa).

It belongs to the universal ribosomal protein uL30 family. Part of the 50S ribosomal subunit.

In Psychrobacter arcticus (strain DSM 17307 / VKM B-2377 / 273-4), this protein is Large ribosomal subunit protein uL30.